The primary structure comprises 179 residues: Large ribosomal subunit protein bL17 (179 aa).

The segment at 127-179 is disordered; the sequence is TDTLPDTVIDTGPDSAPDPVPGSEPGSAAGDLPDADTAPADPGESSSNQRVIR. Residues 154 to 168 are compositionally biased toward low complexity; that stretch reads AAGDLPDADTAPADP. Over residues 170 to 179 the composition is skewed to polar residues; the sequence is ESSSNQRVIR.

The protein belongs to the bacterial ribosomal protein bL17 family. Part of the 50S ribosomal subunit. Contacts protein L32.

The polypeptide is Large ribosomal subunit protein bL17 (Tropheryma whipplei (strain TW08/27) (Whipple's bacillus)).